The primary structure comprises 124 residues: U33-theraphotoxin-Cg1a (124 aa).

Residues 1–17 form the signal peptide; that stretch reads MKFAVAIAFTLLVCVFA. 5 cysteine pairs are disulfide-bonded: Cys26/Cys37, Cys31/Cys51, Cys36/Cys75, Cys61/Cys83, and Cys77/Cys94. Over residues 93–108 the composition is skewed to basic and acidic residues; sequence RCQEESGKSDKSKESQ. The interval 93 to 124 is disordered; it reads RCQEESGKSDKSKESQGSDESEESEESKESCG. The segment covering 109–118 has biased composition (acidic residues); that stretch reads GSDESEESEE.

This sequence belongs to the neurotoxin 32 family. As to expression, expressed by the venom gland.

It is found in the secreted. The protein is U33-theraphotoxin-Cg1a of Chilobrachys guangxiensis (Chinese earth tiger tarantula).